We begin with the raw amino-acid sequence, 421 residues long: Forkhead box protein J1 (421 aa).

Disordered stretches follow at residues 1-34 (MAES…DSLT) and 48-116 (KAPA…DYAT). The span at 66–80 (PGSAAPGSPLAADPA) shows a compositional bias: low complexity. Residues 90-99 (KPTSSCTSRS) are compositionally biased toward polar residues. Residues 120–210 (VKPPYSYATL…YAERLLSGAF (91 aa)) constitute a DNA-binding region (fork-head). The tract at residues 261-302 (AGWGAGEGRLGHKRKQPLPKRVAKVPRPPSTLLPTPEEQGEL) is disordered. The span at 271 to 284 (GHKRKQPLPKRVAK) shows a compositional bias: basic residues.

This sequence belongs to the FOXJ1 family. As to expression, testis, oviduct, lung and brain cortex.

It is found in the nucleus. Transcription factor specifically required for the formation of motile cilia. Acts by activating transcription of genes that mediate assembly of motile cilia, such as CFAP157. Binds the DNA consensus sequences 5'-HWDTGTTTGTTTA-3' or 5'-KTTTGTTGTTKTW-3' (where H is not G, W is A or T, D is not C, and K is G or T). Activates the transcription of a variety of ciliary proteins in the developing brain and lung. This chain is Forkhead box protein J1, found in Homo sapiens (Human).